The following is a 70-amino-acid chain: Conotoxin Im23.3 (70 aa).

A signal peptide spans methionine 1–glycine 22. Residues aspartate 23–alanine 28 constitute a propeptide that is removed on maturation. Intrachain disulfides connect cysteine 34–cysteine 41, cysteine 45–cysteine 53, and cysteine 54–cysteine 69.

Belongs to the conotoxin K superfamily. In terms of tissue distribution, expressed by the venom duct.

The protein resides in the secreted. In terms of biological role, neurotoxin that induces excitatory symptoms in mice following intracranial administration. No symptoms are observed after intraperitoneal and intravenous (tail vein) injections. The sequence is that of Conotoxin Im23.3 from Conus imperialis (Imperial cone).